A 238-amino-acid polypeptide reads, in one-letter code: 1-(5-phosphoribosyl)-5-[(5-phosphoribosylamino)methylideneamino] imidazole-4-carboxamide isomerase (238 aa).

Asp-8 functions as the Proton acceptor in the catalytic mechanism. Asp-130 functions as the Proton donor in the catalytic mechanism.

Belongs to the HisA/HisF family.

The protein resides in the cytoplasm. The enzyme catalyses 1-(5-phospho-beta-D-ribosyl)-5-[(5-phospho-beta-D-ribosylamino)methylideneamino]imidazole-4-carboxamide = 5-[(5-phospho-1-deoxy-D-ribulos-1-ylimino)methylamino]-1-(5-phospho-beta-D-ribosyl)imidazole-4-carboxamide. Its pathway is amino-acid biosynthesis; L-histidine biosynthesis; L-histidine from 5-phospho-alpha-D-ribose 1-diphosphate: step 4/9. The chain is 1-(5-phosphoribosyl)-5-[(5-phosphoribosylamino)methylideneamino] imidazole-4-carboxamide isomerase from Methanococcus maripaludis (strain C7 / ATCC BAA-1331).